Consider the following 101-residue polypeptide: MDKSKQPFRKSKRSFRRRLPPIGSGDRIDYRNMSLIGRFISEQGKILSRRVNRLTLKQQRLITIAIKQARILSPLPFLNNEKQFERTESLPRITGTRTIKK.

A compositionally biased stretch (basic residues) spans 1-19 (MDKSKQPFRKSKRSFRRRL). The disordered stretch occupies residues 1 to 24 (MDKSKQPFRKSKRSFRRRLPPIGS).

Belongs to the bacterial ribosomal protein bS18 family. Part of the 30S ribosomal subunit.

The protein resides in the plastid. It is found in the chloroplast. The polypeptide is Small ribosomal subunit protein bS18c (Amborella trichopoda).